We begin with the raw amino-acid sequence, 229 residues long: LexA repressor (229 aa).

A DNA-binding region (H-T-H motif) is located at residues Phe26–Thr46. Catalysis depends on for autocatalytic cleavage activity residues Ser149 and Lys187.

The protein belongs to the peptidase S24 family. In terms of assembly, homodimer.

The enzyme catalyses Hydrolysis of Ala-|-Gly bond in repressor LexA.. Represses a number of genes involved in the response to DNA damage (SOS response), including recA and lexA. In the presence of single-stranded DNA, RecA interacts with LexA causing an autocatalytic cleavage which disrupts the DNA-binding part of LexA, leading to derepression of the SOS regulon and eventually DNA repair. This is LexA repressor from Phenylobacterium zucineum (strain HLK1).